Consider the following 444-residue polypeptide: Methylenetetrahydrofolate--tRNA-(uracil-5-)-methyltransferase TrmFO (444 aa).

10 to 15 (GAGLAG) lines the FAD pocket.

It belongs to the MnmG family. TrmFO subfamily. It depends on FAD as a cofactor.

Its subcellular location is the cytoplasm. The catalysed reaction is uridine(54) in tRNA + (6R)-5,10-methylene-5,6,7,8-tetrahydrofolate + NADH + H(+) = 5-methyluridine(54) in tRNA + (6S)-5,6,7,8-tetrahydrofolate + NAD(+). It catalyses the reaction uridine(54) in tRNA + (6R)-5,10-methylene-5,6,7,8-tetrahydrofolate + NADPH + H(+) = 5-methyluridine(54) in tRNA + (6S)-5,6,7,8-tetrahydrofolate + NADP(+). In terms of biological role, catalyzes the folate-dependent formation of 5-methyl-uridine at position 54 (M-5-U54) in all tRNAs. This Streptococcus equi subsp. equi (strain 4047) protein is Methylenetetrahydrofolate--tRNA-(uracil-5-)-methyltransferase TrmFO.